The sequence spans 336 residues: Anthranilate phosphoribosyltransferase (336 aa).

5-phospho-alpha-D-ribose 1-diphosphate is bound by residues Gly-79, 82–83, Thr-87, 89–92, 107–115, and Ala-119; these read GD, NIST, and KHGNRCVSS. Gly-79 is an anthranilate binding site. Ser-91 contacts Mg(2+). Asn-110 is an anthranilate binding site. Residue Arg-165 coordinates anthranilate. The Mg(2+) site is built by Asp-224 and Glu-225.

The protein belongs to the anthranilate phosphoribosyltransferase family. In terms of assembly, homodimer. Mg(2+) serves as cofactor.

It carries out the reaction N-(5-phospho-beta-D-ribosyl)anthranilate + diphosphate = 5-phospho-alpha-D-ribose 1-diphosphate + anthranilate. Its pathway is amino-acid biosynthesis; L-tryptophan biosynthesis; L-tryptophan from chorismate: step 2/5. Catalyzes the transfer of the phosphoribosyl group of 5-phosphorylribose-1-pyrophosphate (PRPP) to anthranilate to yield N-(5'-phosphoribosyl)-anthranilate (PRA). The sequence is that of Anthranilate phosphoribosyltransferase from Lachnoclostridium phytofermentans (strain ATCC 700394 / DSM 18823 / ISDg) (Clostridium phytofermentans).